Reading from the N-terminus, the 313-residue chain is Formimidoylglutamase (313 aa).

The Mn(2+) site is built by His-130, Asp-155, His-157, Asp-159, Asp-241, and Asp-243.

This sequence belongs to the arginase family. Requires Mn(2+) as cofactor.

The enzyme catalyses N-formimidoyl-L-glutamate + H2O = formamide + L-glutamate. Its pathway is amino-acid degradation; L-histidine degradation into L-glutamate; L-glutamate from N-formimidoyl-L-glutamate (hydrolase route): step 1/1. Its function is as follows. Catalyzes the conversion of N-formimidoyl-L-glutamate to L-glutamate and formamide. The chain is Formimidoylglutamase from Salmonella heidelberg (strain SL476).